A 90-amino-acid polypeptide reads, in one-letter code: MSITSEKKKSLMNIYAIKEDDTGSSFVQCAILTERISNLTEHFKVHKHDHHSKRGLLILIGRRRKHLNYIKRKFGNEAYQELIEKLGIRK.

This sequence belongs to the universal ribosomal protein uS15 family. In terms of assembly, part of the 30S ribosomal subunit. Forms a bridge to the 50S subunit in the 70S ribosome, contacting the 23S rRNA.

In terms of biological role, one of the primary rRNA binding proteins, it binds directly to 16S rRNA where it helps nucleate assembly of the platform of the 30S subunit by binding and bridging several RNA helices of the 16S rRNA. Functionally, forms an intersubunit bridge (bridge B4) with the 23S rRNA of the 50S subunit in the ribosome. This chain is Small ribosomal subunit protein uS15, found in Wolbachia pipientis wMel.